The following is a 51-amino-acid chain: Sperm protamine P1 (51 aa).

This sequence belongs to the protamine P1 family. Testis.

The protein localises to the nucleus. The protein resides in the chromosome. Functionally, protamines substitute for histones in the chromatin of sperm during the haploid phase of spermatogenesis. They compact sperm DNA into a highly condensed, stable and inactive complex. This chain is Sperm protamine P1 (PRM1), found in Nasalis larvatus (Proboscis monkey).